Consider the following 447-residue polypeptide: Phosphoglucosamine mutase (447 aa).

S106 acts as the Phosphoserine intermediate in catalysis. Mg(2+)-binding residues include S106, D245, D247, and D249. Residue S106 is modified to Phosphoserine.

The protein belongs to the phosphohexose mutase family. It depends on Mg(2+) as a cofactor. Activated by phosphorylation.

It catalyses the reaction alpha-D-glucosamine 1-phosphate = D-glucosamine 6-phosphate. Functionally, catalyzes the conversion of glucosamine-6-phosphate to glucosamine-1-phosphate. This Cupriavidus taiwanensis (strain DSM 17343 / BCRC 17206 / CCUG 44338 / CIP 107171 / LMG 19424 / R1) (Ralstonia taiwanensis (strain LMG 19424)) protein is Phosphoglucosamine mutase.